A 3169-amino-acid polypeptide reads, in one-letter code: FRAS1-related extracellular matrix protein 2 (3169 aa).

The tract at residues 1–24 (MHSAGTPGLSSRRTGNSTSFQPGP) is disordered. The signal sequence occupies residues 1–46 (MHSAGTPGLSSRRTGNSTSFQPGPPPPPRLLLLLLLLLSLVSRVPA). Over residues 8–21 (GLSSRRTGNSTSFQ) the composition is skewed to polar residues. The Extracellular segment spans residues 47 to 3113 (QPAAFGRALL…SPSSAVSLVT (3067 aa)). CSPG repeat units lie at residues 319–413 (KPSF…LELE), 438–537 (APVV…LRMV), 560–675 (PPVL…FRVQ), 700–807 (PPEL…FQVE), 828–919 (QPPE…LEVS), 945–1037 (HPTG…LSLS), 1066–1168 (APEI…FRCS), 1189–1282 (EQPE…IKLT), 1303–1399 (TPRM…FDVT), 1420–1512 (VFPD…FQVT), 1532–1621 (KKPV…FTVT), and 1655–1752 (VPQI…FAVE). An N-linked (GlcNAc...) asparagine glycan is attached at N358. N-linked (GlcNAc...) asparagine glycans are attached at residues N1244 and N1369. 2 N-linked (GlcNAc...) asparagine glycosylation sites follow: N1584 and N1741. 5 consecutive Calx-beta domains span residues 1759-1858 (LTYQ…VVLS), 1871-1982 (ATVE…VLLS), 1997-2103 (QVTI…LVLR), 2118-2220 (VSIN…LVLG), and 2238-2342 (TLIR…VHLK). Positions 3036–3057 (SLVSQGKPQSTTKSRKKREIRS) are disordered. Residues 3037 to 3047 (LVSQGKPQSTT) are compositionally biased toward polar residues. Residues 3114-3134 (VVGGTTVGLLTICLTVIAVLM) traverse the membrane as a helical segment. The Cytoplasmic segment spans residues 3135–3169 (CRGKESFRGKDAPKGSSSSEPMVPPQSHHNDSSEV). A disordered region spans residues 3141–3169 (FRGKDAPKGSSSSEPMVPPQSHHNDSSEV).

It belongs to the FRAS1 family. Interacts with FREM1.

It is found in the cell membrane. Extracellular matrix protein required for maintenance of the integrity of the skin epithelium and for maintenance of renal epithelia. Required for epidermal adhesion. Involved in the development of eyelids and the anterior segment of the eyeballs. This is FRAS1-related extracellular matrix protein 2 (FREM2) from Homo sapiens (Human).